Here is a 227-residue protein sequence, read N- to C-terminus: MELVFIRHGFSEWNAKNLFTGWRDVNLTERGIEEAKSAGKKLLEAGFEFDIAFTSVLTRAIKTCNIVLEESNQLWIPQVKNWRLNERHYGALQGLDKKATAEQYGDEQVHIWRRSYDISPPDLDPQDPHSAHNDRRYAHLPSDVVPDAENLKITLERVLPFWEDQIAPALLAGKRVLVTAHGNSLRALAKHIEGISDADIMDLEIPTGQPLVYKLDDNLKVVEKYYL.

Substrate is bound by residues R7–N14, T20–G21, R59, E86–Y89, K97, R113–R114, and G182–N183. The active-site Tele-phosphohistidine intermediate is the H8. Residue E86 is the Proton donor/acceptor of the active site.

Belongs to the phosphoglycerate mutase family. BPG-dependent PGAM subfamily. As to quaternary structure, homodimer.

The catalysed reaction is (2R)-2-phosphoglycerate = (2R)-3-phosphoglycerate. Its pathway is carbohydrate degradation; glycolysis; pyruvate from D-glyceraldehyde 3-phosphate: step 3/5. In terms of biological role, catalyzes the interconversion of 2-phosphoglycerate and 3-phosphoglycerate. This chain is 2,3-bisphosphoglycerate-dependent phosphoglycerate mutase, found in Pasteurella multocida (strain Pm70).